We begin with the raw amino-acid sequence, 327 residues long: Aquaporin-1 (327 aa).

Residues 1–34 are disordered; sequence MSSNDSNDTDKQHTRLDPTGVDDAYIPPEQPETK. The Cytoplasmic segment spans residues 1–48; it reads MSSNDSNDTDKQHTRLDPTGVDDAYIPPEQPETKHHRFKISKDTLRNH. A helical membrane pass occupies residues 49 to 69; the sequence is FIAAAGEFCGTFMFLWCAYVI. Residues 70 to 91 lie on the Extracellular side of the membrane; that stretch reads CNVANHDVALVAAPDGSHPGQL. The helical transmembrane segment at 92–112 threads the bilayer; it reads IMIAIGFGFSVMFSIWCFAGV. At 113 to 136 the chain is on the cytoplasmic side; it reads SGGALNPAVSLSLCLARAVSPTRC. Positions 118 to 120 match the NPA 1 motif; sequence NPA. The helical transmembrane segment at 137–157 threads the bilayer; sequence VVMWVSQIVAGMAAGGAASAM. Residues 158 to 176 lie on the Extracellular side of the membrane; sequence TPGEVLFANSLGLGCSRTR. A helical transmembrane segment spans residues 177 to 197; it reads GLFLEMFGTAILCLTVLMTAV. Over 198–203 the chain is Cytoplasmic; that stretch reads EKRETN. Residues 204-224 traverse the membrane as a helical segment; it reads FMAALPIGISLFIAHVALTAY. Residues 225 to 248 are Extracellular-facing; it reads TGTGVNPARSLGAAVAARYFPHYH. Positions 230–232 match the NPA 2 motif; it reads NPA. Residues 249–269 form a helical membrane-spanning segment; that stretch reads WIYWIGPLLGSILAWSVWQLL. The Cytoplasmic portion of the chain corresponds to 270–327; that stretch reads QILDYTTYVTAEKAASTKEKAQKKVKPAVPLLWLKSNFSLLFFISRSLALNVIIFGKN.

The protein belongs to the MIP/aquaporin (TC 1.A.8) family.

The protein resides in the endoplasmic reticulum membrane. The protein localises to the cell membrane. In terms of biological role, water channel required to facilitate the transport of water across membranes. Involved in sporulation, freeze tolerance and osmotolerance. Is non-functional in most laboratory strains. The protein is Aquaporin-1 (AQY1) of Saccharomyces cerevisiae (strain Lalvin EC1118 / Prise de mousse) (Baker's yeast).